The following is an 800-amino-acid chain: Mitogen-activated protein kinase kinase kinase 20 (800 aa).

An N-acetylserine modification is found at Ser2. Phosphoserine; by autocatalysis occurs at positions 2, 3, and 7. In terms of domain architecture, Protein kinase spans 16–277; that stretch reads LQFFENCGGG…SLPDKCNSFL (262 aa). ATP-binding positions include 22–30 and Lys45; that span reads CGGGSFGSV. The Proton acceptor role is filled by Asp133. At Thr161 the chain carries Phosphothreonine; by autocatalysis. Residue Ser165 is modified to Phosphoserine; by autocatalysis. Ser275 bears the Phosphoserine mark. A leucine-zipper region spans residues 287-308; that stretch reads IEATLERLKKLERDLSFKEQEL. At Ser302 the chain carries Phosphoserine; by autocatalysis. Residues Trp339, Glu429, Lys434, Asp454, and Ser567 each carry the phosphoserine modification. Positions 339–410 constitute an SAM domain; it reads WTEDDVYCWV…KSAIEKLTHD (72 aa). Residue Thr586 is modified to Phosphothreonine; by autocatalysis. At Ser587 the chain carries Phosphoserine; by autocatalysis. Residues Ser593 and Ser599 each carry the phosphoserine modification. Thr628 is modified (phosphothreonine). Ser633, Ser637, and Ser648 each carry phosphoserine. Residues Ser649 and Ser660 each carry the phosphoserine; by autocatalysis modification. Residues 652–666 are compositionally biased toward polar residues; it reads LNSRDSGFSSGNTDT. A disordered region spans residues 652 to 800; the sequence is LNSRDSGFSS…RGDHRGWRNF (149 aa). Thr664 is subject to Phosphothreonine; by autocatalysis. The span at 667-678 shows a compositional bias: basic and acidic residues; that stretch reads SSERGRYSDRSR. The segment at 670-713 is sensing domain (S); that stretch reads RGRYSDRSRNKYGRGSISLNSSPRGRYSGKSQHSTPSRGRYPGK. At Ser685 the chain carries Phosphoserine. Polar residues-rich tracts occupy residues 686-706 and 717-726; these read ISLN…STPS and VSQSALNPHQ. A phosphoserine; by autocatalysis mark is found at Ser718 and Ser720. Phosphoserine occurs at positions 727 and 733. Basic and acidic residues predominate over residues 728 to 738; it reads PDFKRSPRDLH. A Phosphothreonine; by autocatalysis modification is found at Thr742. 2 stretches are compositionally biased toward basic and acidic residues: residues 750–763 and 785–800; these read PETD…DSKV and TNKE…WRNF. Residues 774 to 800 form a C-terminal domain (CTD) region; it reads RKKPHRPSPAKTNKERARGDHRGWRNF.

Belongs to the protein kinase superfamily. STE Ser/Thr protein kinase family. MAP kinase kinase kinase subfamily. As to quaternary structure, homodimer. Interacts with ZNF33A. Component of a signaling complex containing at least AKAP13, PKN1, MAPK14, MAP3K20 and MAP2K3. Within this complex, AKAP13 interacts directly with PKN1, which in turn recruits MAPK14, MAP2K3 and MAP3K20. Interacts with EIF2AK4/GCN2; promoting EIF2AK4/GCN2 kinase activity. Interacts with isoform ZAKbeta. In terms of assembly, interacts with isoform ZAKalpha. Mg(2+) is required as a cofactor. In terms of processing, activated by phosphorylation by PKN1, followed by autophosphorylation on Thr-161 and Ser-165. Autophosphorylation in response to ribotoxic stress promotes dissociation from colliding ribosomes and activation. As to expression, ubiquitously expressed. Isoform ZAKbeta is the predominant form in all tissues examined, except for liver, in which isoform ZAKalpha is more highly expressed.

The protein localises to the cytoplasm. Its subcellular location is the nucleus. It carries out the reaction L-seryl-[protein] + ATP = O-phospho-L-seryl-[protein] + ADP + H(+). The catalysed reaction is L-threonyl-[protein] + ATP = O-phospho-L-threonyl-[protein] + ADP + H(+). Activated in response to stress, such as ribosomal stress, osmotic shock and ionizing radiation. Activated by phosphorylation by PKN1, followed by autophosphorylation on Thr-161 and Ser-165. Inhibited by nilotinib, sorafenib, dabrafenib, rebastinib and vemurafenib. Selectively inhibited by N-(3)-((1H-Pyrazolo[3,4-b]pyridin-5-yl)ethynyl)benzenesulfonamide compound 3h. Selectively inhibited by 1,2,3-triazole benzenesulfonamides. Stress-activated component of a protein kinase signal transduction cascade that promotes programmed cell death in response to various stress, such as ribosomal stress, osmotic shock and ionizing radiation. Acts by catalyzing phosphorylation of MAP kinase kinases, leading to activation of the JNK (MAPK8/JNK1, MAPK9/JNK2 and/or MAPK10/JNK3) and MAP kinase p38 (MAPK11, MAPK12, MAPK13 and/or MAPK14) pathways. Activates JNK through phosphorylation of MAP2K4/MKK4 and MAP2K7/MKK7, and MAP kinase p38 gamma (MAPK12) via phosphorylation of MAP2K3/MKK3 and MAP2K6/MKK6. Involved in stress associated with adrenergic stimulation: contributes to cardiac decompensation during periods of acute cardiac stress. May be involved in regulation of S and G2 cell cycle checkpoint by mediating phosphorylation of CHEK2. In terms of biological role, key component of the stress-activated protein kinase signaling cascade in response to ribotoxic stress or UV-B irradiation. Acts as the proximal sensor of ribosome collisions during the ribotoxic stress response (RSR): directly binds to the ribosome by inserting its flexible C-terminus into the ribosomal intersubunit space, thereby acting as a sentinel for colliding ribosomes. Upon ribosome collisions, activates either the stress-activated protein kinase signal transduction cascade or the integrated stress response (ISR), leading to programmed cell death or cell survival, respectively. Dangerous levels of ribosome collisions trigger the autophosphorylation and activation of MAP3K20, which dissociates from colliding ribosomes and phosphorylates MAP kinase kinases, leading to activation of the JNK and MAP kinase p38 pathways that promote programmed cell death. Less dangerous levels of ribosome collisions trigger the integrated stress response (ISR): MAP3K20 activates EIF2AK4/GCN2 independently of its protein-kinase activity, promoting EIF2AK4/GCN2-mediated phosphorylation of EIF2S1/eIF-2-alpha. Also part of the stress-activated protein kinase signaling cascade triggering the NLRP1 inflammasome in response to UV-B irradiation: ribosome collisions activate MAP3K20, which directly phosphorylates NLRP1, leading to activation of the NLRP1 inflammasome and subsequent pyroptosis. NLRP1 is also phosphorylated by MAP kinase p38 downstream of MAP3K20. Also acts as a histone kinase by phosphorylating histone H3 at 'Ser-28' (H3S28ph). Functionally, isoform that lacks the C-terminal region that mediates ribosome-binding: does not act as a sensor of ribosome collisions in response to ribotoxic stress. May act as an antagonist of isoform ZAKalpha: interacts with isoform ZAKalpha, leading to decrease the expression of isoform ZAKalpha. The chain is Mitogen-activated protein kinase kinase kinase 20 from Homo sapiens (Human).